The sequence spans 291 residues: Inactive dihydropteroate synthase 2 (291 aa).

One can recognise a Pterin-binding domain in the interval 15-272 (QLIMAIVNRT…EVVATRRVLE (258 aa)).

It belongs to the DHPS family. As to quaternary structure, homodimer.

Functionally, has very low affinity for the DHPS substrate 6-hydroxymethyl-7,8-dihydropterin-pyrophosphate, but can bind the inhibitor dapsone. Seems to lack dihydropteroate synthase activity, and does probably not function in folate metabolism. The protein is Inactive dihydropteroate synthase 2 (folP2) of Mycobacterium leprae (strain TN).